A 165-amino-acid polypeptide reads, in one-letter code: MALNLQDKQAIVAEVSEVAKGALSAVVADSRGVTVDKMTELRKAGREAGVYMRVVRNTLLRRVVEGTQFECLKDTFVGPTLIAYSMEHPGAAARLFKEFAKANAKFEVKAAAFEGELIPAAQIDRLATLPTYEEALARLMSTMKEAAAGKLVRTLAAVRDAKEAA.

The protein belongs to the universal ribosomal protein uL10 family. In terms of assembly, part of the ribosomal stalk of the 50S ribosomal subunit. The N-terminus interacts with L11 and the large rRNA to form the base of the stalk. The C-terminus forms an elongated spine to which L12 dimers bind in a sequential fashion forming a multimeric L10(L12)X complex.

Its function is as follows. Forms part of the ribosomal stalk, playing a central role in the interaction of the ribosome with GTP-bound translation factors. The chain is Large ribosomal subunit protein uL10 from Pectobacterium carotovorum subsp. carotovorum (strain PC1).